The following is a 380-amino-acid chain: Putative heat stress transcription factor B-4a (380 aa).

The hydrophobic repeat HR-A/B stretch occupies residues 216-245; that stretch reads LLRGNAALVQELAHMRKLYSDIIYFVQNHV. 2 disordered regions span residues 268 to 296 and 314 to 380; these read PAGG…TVAE and INEV…VSPP. Positions 278-296 are enriched in low complexity; that stretch reads VRGASGRSATSSSSLTVAE. The Nuclear localization signal signature appears at 346 to 348; sequence RKR.

Belongs to the HSF family. Class B subfamily. In terms of assembly, homotrimer. In terms of processing, exhibits temperature-dependent phosphorylation.

The protein resides in the nucleus. Functionally, transcriptional regulator that specifically binds DNA of heat shock promoter elements (HSE). In Oryza sativa subsp. japonica (Rice), this protein is Putative heat stress transcription factor B-4a (HSFB4A).